Reading from the N-terminus, the 146-residue chain is Large ribosomal subunit protein bL19 (146 aa).

It belongs to the bacterial ribosomal protein bL19 family.

Its function is as follows. This protein is located at the 30S-50S ribosomal subunit interface and may play a role in the structure and function of the aminoacyl-tRNA binding site. The sequence is that of Large ribosomal subunit protein bL19 from Bartonella quintana (strain Toulouse) (Rochalimaea quintana).